The primary structure comprises 288 residues: 4-diphosphocytidyl-2-C-methyl-D-erythritol kinase (288 aa).

Lys-11 is a catalytic residue. Residue 100 to 110 (PIAAGLGSGSS) coordinates ATP. Residue Asp-140 is part of the active site.

It belongs to the GHMP kinase family. IspE subfamily.

The catalysed reaction is 4-CDP-2-C-methyl-D-erythritol + ATP = 4-CDP-2-C-methyl-D-erythritol 2-phosphate + ADP + H(+). The protein operates within isoprenoid biosynthesis; isopentenyl diphosphate biosynthesis via DXP pathway; isopentenyl diphosphate from 1-deoxy-D-xylulose 5-phosphate: step 3/6. Functionally, catalyzes the phosphorylation of the position 2 hydroxy group of 4-diphosphocytidyl-2C-methyl-D-erythritol. The polypeptide is 4-diphosphocytidyl-2-C-methyl-D-erythritol kinase (Wolbachia pipientis wMel).